We begin with the raw amino-acid sequence, 334 residues long: MEQNSRALIDGFNRKIDYLRMSVTDRCDFRCVYCMAEDMQFLPRQQILSLEELFQVAERFVALGTRKIRLTGGEPLVRQGIVELCGRIAALPGLRELCMTSNGSQLGRLAQPLFDAGVTRLNISLDSLDTDRFKQLTRTGDLAQVVAGIDAARQAGFKRTKLNCVVLKGRNDHELVDLVRFAIDRELDITFIEEMPLGTISEHERGESFCSSDEVRERLAGQFTLIESTESSQGPARYWRLAEAANTRVGFISPHSHNFCATCNRVRLTVEGRLLLCLGNEHSVDLKHVLRAHPGNPERLEKAIRDSLHLKPYRHHFEVGGEVQILRFMNMTGG.

One can recognise a Radical SAM core domain in the interval 11–236 (GFNRKIDYLR…ESTESSQGPA (226 aa)). Arg20 provides a ligand contact to GTP. [4Fe-4S] cluster is bound by residues Cys27 and Cys31. Residue Tyr33 participates in S-adenosyl-L-methionine binding. Cys34 contributes to the [4Fe-4S] cluster binding site. Arg69 is a binding site for GTP. Gly73 is an S-adenosyl-L-methionine binding site. Thr100 contacts GTP. Ser124 contacts S-adenosyl-L-methionine. Lys161 is a binding site for GTP. Met195 is a binding site for S-adenosyl-L-methionine. Positions 260 and 263 each coordinate [4Fe-4S] cluster. 265 to 267 (RVR) is a binding site for GTP. Position 277 (Cys277) interacts with [4Fe-4S] cluster.

It belongs to the radical SAM superfamily. MoaA family. As to quaternary structure, monomer and homodimer. [4Fe-4S] cluster is required as a cofactor.

The catalysed reaction is GTP + AH2 + S-adenosyl-L-methionine = (8S)-3',8-cyclo-7,8-dihydroguanosine 5'-triphosphate + 5'-deoxyadenosine + L-methionine + A + H(+). It participates in cofactor biosynthesis; molybdopterin biosynthesis. In terms of biological role, catalyzes the cyclization of GTP to (8S)-3',8-cyclo-7,8-dihydroguanosine 5'-triphosphate. The chain is GTP 3',8-cyclase from Pseudomonas putida (strain GB-1).